A 221-amino-acid chain; its full sequence is Small ribosomal subunit protein uS3 (221 aa).

Positions 39 to 107 (LRKFLKDKLK…EVFLSIQEVR (69 aa)) constitute a KH type-2 domain.

Belongs to the universal ribosomal protein uS3 family. As to quaternary structure, part of the 30S ribosomal subunit. Forms a tight complex with proteins S10 and S14.

Functionally, binds the lower part of the 30S subunit head. Binds mRNA in the 70S ribosome, positioning it for translation. This is Small ribosomal subunit protein uS3 from Bdellovibrio bacteriovorus (strain ATCC 15356 / DSM 50701 / NCIMB 9529 / HD100).